We begin with the raw amino-acid sequence, 336 residues long: Filaggrin (336 aa).

Positions 1–313 are disordered; the sequence is PDGSGRSSNR…GVQGAAASGQ (313 aa). 3 stretches are compositionally biased toward low complexity: residues 16–26, 40–66, and 73–98; these read QLSPSQSSDSQ, SSSA…LAAD, and ARQG…SSSA. 3 stretches are compositionally biased toward basic and acidic residues: residues 100 to 120, 163 to 176, and 184 to 195; these read RQGR…HSDF, DSQH…EQQR, and HQHEHEQPESGH. The span at 285-311 shows a compositional bias: low complexity; sequence AQRGQSSSANRRAGSSSGSGVQGAAAS.

The protein belongs to the S100-fused protein family. In terms of processing, filaggrin is initially synthesized as a large, insoluble, highly phosphorylated precursor containing many tandem copies of 248 AA, which are not separated by large linker sequences. During terminal differentiation it is dephosphorylated and proteolytically cleaved. As to expression, expressed in the granular layer of the epidermis (at protein level). Expressed in the epidermis of the ear (at protein level).

Its subcellular location is the cytoplasmic granule. Its function is as follows. Aggregates keratin intermediate filaments and promotes disulfide-bond formation among the intermediate filaments during terminal differentiation of mammalian epidermis. This chain is Filaggrin (Flg), found in Mus musculus (Mouse).